Here is a 251-residue protein sequence, read N- to C-terminus: Adenosylcobinamide-GDP ribazoletransferase (251 aa).

6 helical membrane passes run 29-49, 65-85, 110-130, 136-156, 175-195, and 198-218; these read FAGM…ILAV, SLLI…DGAM, AFGA…LCYL, LLIL…IVRY, AIDL…IARF, and LTVA…TGAW.

It belongs to the CobS family. The cofactor is Mg(2+).

It localises to the cell inner membrane. The enzyme catalyses alpha-ribazole + adenosylcob(III)inamide-GDP = adenosylcob(III)alamin + GMP + H(+). It carries out the reaction alpha-ribazole 5'-phosphate + adenosylcob(III)inamide-GDP = adenosylcob(III)alamin 5'-phosphate + GMP + H(+). The protein operates within cofactor biosynthesis; adenosylcobalamin biosynthesis; adenosylcobalamin from cob(II)yrinate a,c-diamide: step 7/7. Its function is as follows. Joins adenosylcobinamide-GDP and alpha-ribazole to generate adenosylcobalamin (Ado-cobalamin). Also synthesizes adenosylcobalamin 5'-phosphate from adenosylcobinamide-GDP and alpha-ribazole 5'-phosphate. The protein is Adenosylcobinamide-GDP ribazoletransferase of Synechococcus elongatus (strain ATCC 33912 / PCC 7942 / FACHB-805) (Anacystis nidulans R2).